A 430-amino-acid polypeptide reads, in one-letter code: Enolase (430 aa).

Gln-167 provides a ligand contact to (2R)-2-phosphoglycerate. Catalysis depends on Glu-209, which acts as the Proton donor. The Mg(2+) site is built by Asp-245, Glu-286, and Asp-313. The (2R)-2-phosphoglycerate site is built by Lys-338, Arg-367, Ser-368, and Lys-389. The active-site Proton acceptor is Lys-338.

Belongs to the enolase family. Mg(2+) is required as a cofactor.

Its subcellular location is the cytoplasm. It is found in the secreted. It localises to the cell surface. It carries out the reaction (2R)-2-phosphoglycerate = phosphoenolpyruvate + H2O. It functions in the pathway carbohydrate degradation; glycolysis; pyruvate from D-glyceraldehyde 3-phosphate: step 4/5. Functionally, catalyzes the reversible conversion of 2-phosphoglycerate (2-PG) into phosphoenolpyruvate (PEP). It is essential for the degradation of carbohydrates via glycolysis. In Parasynechococcus marenigrum (strain WH8102), this protein is Enolase.